The primary structure comprises 403 residues: Synaptotagmin-7 (403 aa).

Residues 1-16 (MYRDPEAASPGAPTRD) lie on the Vesicular side of the membrane. A helical transmembrane segment spans residues 17 to 37 (VLLVSAIITVSLSVTIVLCGL). Topologically, residues 38–403 (CHWCQRKLGK…PVAQWHQLKA (366 aa)) are cytoplasmic. At serine 52 the chain carries Phosphoserine. Positions 53–103 (LETVGTPDSGRGRGEKKAIKLPAGGKAVNTAPVPGQTPHDESDRRTETRSS) are disordered. A Phosphothreonine modification is found at threonine 58. Position 61 is a phosphoserine (serine 61). The segment covering 90-100 (PHDESDRRTET) has biased composition (basic and acidic residues). Serine 119 and serine 122 each carry phosphoserine. C2 domains lie at 135–255 (NLGR…TFWK) and 266–399 (SRGE…AQWH). Aspartate 166 contacts Ca(2+). Glycine 169 and serine 171 each carry asymmetric dimethylarginine. Residues aspartate 172, aspartate 225, aspartate 227, serine 230, aspartate 233, aspartate 297, aspartate 303, aspartate 357, aspartate 359, serine 362, and aspartate 365 each coordinate Ca(2+).

It belongs to the synaptotagmin family. In terms of assembly, homodimer. Can also form heterodimers with SYT6, SYT9 and SYT10. Interacts with calmodulin (CALM1, CALM2 or CALM3). Interacts with CD63; required for localization to lysosomes. Interacts with APP. Requires Ca(2+) as cofactor. Palmitoylated at its vesicular N-terminus; palmitoylation is required for localization to lysosome and phagocytosis in macrophages. As to expression, widely expressed. Expressed in insulin-secreting cells. Present in glucagon-secreting cells (at protein level).

It localises to the cell membrane. Its subcellular location is the presynaptic cell membrane. It is found in the cytoplasmic vesicle. The protein resides in the secretory vesicle. The protein localises to the synaptic vesicle membrane. It localises to the lysosome membrane. Its subcellular location is the phagosome membrane. It is found in the peroxisome membrane. The protein resides in the secretory vesicle membrane. Functionally, ca(2+) sensor involved in Ca(2+)-dependent exocytosis of secretory and synaptic vesicles through Ca(2+) and phospholipid binding to the C2 domain. Ca(2+) induces binding of the C2-domains to phospholipid membranes and to assembled SNARE-complexes; both actions contribute to triggering exocytosis. SYT7 binds Ca(2+) with high affinity and slow kinetics compared to other synaptotagmins. Involved in Ca(2+)-triggered lysosomal exocytosis, a major component of the plasma membrane repair. Ca(2+)-regulated delivery of lysosomal membranes to the cell surface is also involved in the phagocytic uptake of particles by macrophages. Ca(2+)-triggered lysosomal exocytosis also plays a role in bone remodeling by regulating secretory pathways in osteoclasts and osteoblasts. Involved in cholesterol transport from lysosome to peroxisome by promoting membrane contacts between lysosomes and peroxisomes: probably acts by promoting vesicle fusion by binding phosphatidylinositol-4,5-bisphosphate on peroxisomal membranes. Acts as a key mediator of synaptic facilitation, a process also named short-term synaptic potentiation: synaptic facilitation takes place at synapses with a low initial release probability and is caused by influx of Ca(2+) into the axon terminal after spike generation, increasing the release probability of neurotransmitters. Probably mediates synaptic facilitation by directly increasing the probability of release. May also contribute to synaptic facilitation by regulating synaptic vesicle replenishment, a process required to ensure that synaptic vesicles are ready for the arrival of the next action potential: SYT7 is required for synaptic vesicle replenishment by acting as a sensor for Ca(2+) and by forming a complex with calmodulin. Also acts as a regulator of Ca(2+)-dependent insulin and glucagon secretion in beta-cells. Triggers exocytosis by promoting fusion pore opening and fusion pore expansion in chromaffin cells. Also regulates the secretion of some non-synaptic secretory granules of specialized cells. The sequence is that of Synaptotagmin-7 from Mus musculus (Mouse).